The primary structure comprises 156 residues: MNMNATLLGQAIAFALFVWFCMKYVWPPIMEAIEERQKKIADGLSAAERAAKDLDLAQANASDQLKEAKRAATEIIEQANKRKGQILDEAREEALTERQNILTQGEAELETERNRARDELRKQVATLAVIGAEKILERSINLEAQKDILDNITAKL.

The chain crosses the membrane as a helical span at residues 7–29 (LLGQAIAFALFVWFCMKYVWPPI).

Belongs to the ATPase B chain family. In terms of assembly, F-type ATPases have 2 components, F(1) - the catalytic core - and F(0) - the membrane proton channel. F(1) has five subunits: alpha(3), beta(3), gamma(1), delta(1), epsilon(1). F(0) has three main subunits: a(1), b(2) and c(10-14). The alpha and beta chains form an alternating ring which encloses part of the gamma chain. F(1) is attached to F(0) by a central stalk formed by the gamma and epsilon chains, while a peripheral stalk is formed by the delta and b chains.

Its subcellular location is the cell inner membrane. In terms of biological role, f(1)F(0) ATP synthase produces ATP from ADP in the presence of a proton or sodium gradient. F-type ATPases consist of two structural domains, F(1) containing the extramembraneous catalytic core and F(0) containing the membrane proton channel, linked together by a central stalk and a peripheral stalk. During catalysis, ATP synthesis in the catalytic domain of F(1) is coupled via a rotary mechanism of the central stalk subunits to proton translocation. Component of the F(0) channel, it forms part of the peripheral stalk, linking F(1) to F(0). The chain is ATP synthase subunit b from Aliivibrio salmonicida (strain LFI1238) (Vibrio salmonicida (strain LFI1238)).